Consider the following 423-residue polypeptide: Gamma-glutamyl phosphate reductase (423 aa).

This sequence belongs to the gamma-glutamyl phosphate reductase family.

Its subcellular location is the cytoplasm. It catalyses the reaction L-glutamate 5-semialdehyde + phosphate + NADP(+) = L-glutamyl 5-phosphate + NADPH + H(+). It participates in amino-acid biosynthesis; L-proline biosynthesis; L-glutamate 5-semialdehyde from L-glutamate: step 2/2. Functionally, catalyzes the NADPH-dependent reduction of L-glutamate 5-phosphate into L-glutamate 5-semialdehyde and phosphate. The product spontaneously undergoes cyclization to form 1-pyrroline-5-carboxylate. This is Gamma-glutamyl phosphate reductase from Burkholderia orbicola (strain MC0-3).